Here is a 488-residue protein sequence, read N- to C-terminus: Alpha-ketoglutaric semialdehyde dehydrogenase (488 aa).

NAD(+) contacts are provided by residues Lys180 and 233 to 238; that span reads GSNQVG. Glu255 functions as the Proton acceptor in the catalytic mechanism. Cys289 serves as the catalytic Nucleophile. Residues Gln336 and Glu390 each coordinate NAD(+).

It belongs to the aldehyde dehydrogenase family. As to quaternary structure, homotetramer.

It carries out the reaction 2,5-dioxopentanoate + NADP(+) + H2O = 2-oxoglutarate + NADPH + 2 H(+). The catalysed reaction is 2,5-dioxopentanoate + NAD(+) + H2O = 2-oxoglutarate + NADH + 2 H(+). Functionally, catalyzes the NAD(P)(+)-dependent oxidation of alpha-ketoglutaric semialdehyde (alphaKGSA) to alpha-ketoglutarate. Prefers NADP(+) to NAD(+) as a cosubstrate. In vitro, can also use various aldehydes. In Bacillus subtilis (strain 168), this protein is Alpha-ketoglutaric semialdehyde dehydrogenase.